Consider the following 84-residue polypeptide: Large ribosomal subunit protein bL27 (84 aa).

Residues 1-21 (MAHKKGASSTRNGRDSNAQRL) form a disordered region. Residues 7-19 (ASSTRNGRDSNAQ) show a composition bias toward polar residues.

It belongs to the bacterial ribosomal protein bL27 family.

The polypeptide is Large ribosomal subunit protein bL27 (Clavibacter sepedonicus (Clavibacter michiganensis subsp. sepedonicus)).